The sequence spans 367 residues: Serine/threonine-protein kinase-transforming protein Rmil (367 aa).

Positions 1-64 are disordered; sequence EGGSTAGLSA…DSSDDWEIPD (64 aa). The segment covering 33–57 has biased composition (basic and acidic residues); the sequence is QRERKSSSSSEDRNRMKTLGRRDSS. Residues 67-327 form the Protein kinase domain; it reads ITVGQRIGSG…PQILASIELL (261 aa). Residues 73–81 and lysine 93 contribute to the ATP site; that span reads IGSGSFGTV. Aspartate 186 functions as the Proton acceptor in the catalytic mechanism.

Belongs to the protein kinase superfamily. TKL Ser/Thr protein kinase family. RAF subfamily.

The enzyme catalyses L-seryl-[protein] + ATP = O-phospho-L-seryl-[protein] + ADP + H(+). It carries out the reaction L-threonyl-[protein] + ATP = O-phospho-L-threonyl-[protein] + ADP + H(+). This Avian retrovirus IC10 protein is Serine/threonine-protein kinase-transforming protein Rmil (V-RMIL).